The following is a 321-amino-acid chain: Protein-L-histidine N-pros-methyltransferase (321 aa).

Positions 1–24 (MRLWLCWLGCYTLLLWALRRRMWA) are cleaved as a signal peptide. Residue Asn-89 is glycosylated (N-linked (GlcNAc...) asparagine). Positions 177, 213, and 298 each coordinate S-adenosyl-L-homocysteine.

This sequence belongs to the METTL9 family.

It localises to the endoplasmic reticulum. The protein localises to the mitochondrion. The enzyme catalyses L-histidyl-[protein] + S-adenosyl-L-methionine = N(pros)-methyl-L-histidyl-[protein] + S-adenosyl-L-homocysteine + H(+). In terms of biological role, protein-histidine N-methyltransferase that specifically catalyzes 1-methylhistidine (pros-methylhistidine) methylation of target proteins. Mediates methylation of proteins with a His-x-His (HxH) motif (where 'x' is preferably a small amino acid); 1-methylhistidine modification may affect the binding of zinc and other metals to its target proteins. This chain is Protein-L-histidine N-pros-methyltransferase, found in Gallus gallus (Chicken).